A 196-amino-acid chain; its full sequence is Imidazoleglycerol-phosphate dehydratase (196 aa).

It belongs to the imidazoleglycerol-phosphate dehydratase family.

It localises to the cytoplasm. The catalysed reaction is D-erythro-1-(imidazol-4-yl)glycerol 3-phosphate = 3-(imidazol-4-yl)-2-oxopropyl phosphate + H2O. It participates in amino-acid biosynthesis; L-histidine biosynthesis; L-histidine from 5-phospho-alpha-D-ribose 1-diphosphate: step 6/9. This chain is Imidazoleglycerol-phosphate dehydratase, found in Clostridium botulinum (strain Okra / Type B1).